A 155-amino-acid polypeptide reads, in one-letter code: uncharacterized protein (155 aa).

One can recognise a Macro domain in the interval 1–155 (MIVKYIKGDI…IVIVDWEPLL (155 aa)).

This is an uncharacterized protein from Escherichia coli (Bacteriophage T4).